The following is a 1332-amino-acid chain: DEMETER-like protein 2 (1332 aa).

Basic and acidic residues predominate over residues 1-23 (MEVEGEVREKEARVKGRQPETEV). Disordered regions lie at residues 1-29 (MEVEGEVREKEARVKGRQPETEVLHGLPQ), 137-242 (VSTS…TSEE), and 280-317 (VEGSSGEENLTDTTLGMFGHVPKGRRGQRRSNGFKKTD). Residues 137–153 (VSTSTQRTEPESPQITL) show a composition bias toward polar residues. A compositionally biased stretch (low complexity) spans 223–236 (SKAGIKKSSIAATA). A compositionally biased stretch (basic residues) spans 301–312 (PKGRRGQRRSNG). The tract at residues 497–595 (KVQLDPETSR…AYMDLAAEFP (99 aa)) is DEMETER. A compositionally biased stretch (polar residues) spans 739-753 (HQQDPESTIQTQDQQ). Residues 739–810 (HQQDPESTIQ…GGRKRERTER (72 aa)) are disordered. Positions 763–777 (KNRKKPTTSKPKKKS) are enriched in basic residues. Over residues 787–810 (KSVDWDSLRKEAESGGRKRERTER) the composition is skewed to basic and acidic residues. Cys-970, Cys-977, Cys-980, and Cys-986 together coordinate [4Fe-4S] cluster.

This sequence belongs to the DNA glycosylase family. DEMETER subfamily. [4Fe-4S] cluster is required as a cofactor.

Its subcellular location is the nucleus. Functionally, potential transcriptional activator that may act by nicking the target promoter. Catalyzes the release of 5-methylcytosine (5-meC) from DNA by a glycosylase/lyase mechanism. The protein is DEMETER-like protein 2 (DML2) of Arabidopsis thaliana (Mouse-ear cress).